A 149-amino-acid polypeptide reads, in one-letter code: L-alanine exporter AlaE (149 aa).

Helical transmembrane passes span 17–37 (FAMVIFCFITGMFIEIFISGM), 43–63 (LASRMLSIPVNIAIAWPYGVF), 86–106 (LTAYVLFQSPVYAAILFTVGA), and 111–131 (IITAVSSNAAVSCVMGVFYGY).

The protein belongs to the AlaE exporter family.

It localises to the cell inner membrane. Exports L-alanine. The sequence is that of L-alanine exporter AlaE from Aliivibrio salmonicida (strain LFI1238) (Vibrio salmonicida (strain LFI1238)).